The primary structure comprises 413 residues: Probable N-acetyltransferase HLS1-like (413 aa).

The N-acetyltransferase domain occupies 5-187; it reads VEVREYDPSK…VNPVYAHRVN (183 aa).

Belongs to the acetyltransferase family.

This Arabidopsis thaliana (Mouse-ear cress) protein is Probable N-acetyltransferase HLS1-like.